Reading from the N-terminus, the 185-residue chain is Dihydrofolate reductase 1 (185 aa).

The 178-residue stretch at 8–185 folds into the DHFR domain; sequence ELVLVVAADE…QASPRPLDDL (178 aa).

Belongs to the dihydrofolate reductase family.

It carries out the reaction (6S)-5,6,7,8-tetrahydrofolate + NADP(+) = 7,8-dihydrofolate + NADPH + H(+). It functions in the pathway cofactor biosynthesis; tetrahydrofolate biosynthesis; 5,6,7,8-tetrahydrofolate from 7,8-dihydrofolate: step 1/1. In terms of biological role, key enzyme in folate metabolism. Catalyzes an essential reaction for de novo glycine and purine synthesis, and for DNA precursor synthesis. This chain is Dihydrofolate reductase 1 (folA1), found in Haloarcula marismortui (strain ATCC 43049 / DSM 3752 / JCM 8966 / VKM B-1809) (Halobacterium marismortui).